A 769-amino-acid chain; its full sequence is Phosphoribosylformylglycinamidine synthase subunit PurL (769 aa).

The span at 1–13 shows a compositional bias: polar residues; that stretch reads MTGTPSAPTTSPD. The interval 1-30 is disordered; it reads MTGTPSAPTTSPDDQADGPGEGTVDRQPYR. Histidine 65 is an active-site residue. Tyrosine 68 and lysine 109 together coordinate ATP. Position 111 (glutamate 111) interacts with Mg(2+). Residues 112-115 and arginine 134 each bind substrate; that span reads SHNH. Histidine 113 acts as the Proton acceptor in catalysis. Aspartate 135 contributes to the Mg(2+) binding site. Glutamine 260 contacts substrate. Aspartate 288 is a binding site for Mg(2+). 337–339 serves as a coordination point for substrate; sequence ESQ. 2 residues coordinate ATP: asparagine 524 and glycine 561. Residue asparagine 562 participates in Mg(2+) binding. Serine 564 is a substrate binding site.

This sequence belongs to the FGAMS family. Monomer. Part of the FGAM synthase complex composed of 1 PurL, 1 PurQ and 2 PurS subunits.

The protein resides in the cytoplasm. It carries out the reaction N(2)-formyl-N(1)-(5-phospho-beta-D-ribosyl)glycinamide + L-glutamine + ATP + H2O = 2-formamido-N(1)-(5-O-phospho-beta-D-ribosyl)acetamidine + L-glutamate + ADP + phosphate + H(+). Its pathway is purine metabolism; IMP biosynthesis via de novo pathway; 5-amino-1-(5-phospho-D-ribosyl)imidazole from N(2)-formyl-N(1)-(5-phospho-D-ribosyl)glycinamide: step 1/2. In terms of biological role, part of the phosphoribosylformylglycinamidine synthase complex involved in the purines biosynthetic pathway. Catalyzes the ATP-dependent conversion of formylglycinamide ribonucleotide (FGAR) and glutamine to yield formylglycinamidine ribonucleotide (FGAM) and glutamate. The FGAM synthase complex is composed of three subunits. PurQ produces an ammonia molecule by converting glutamine to glutamate. PurL transfers the ammonia molecule to FGAR to form FGAM in an ATP-dependent manner. PurS interacts with PurQ and PurL and is thought to assist in the transfer of the ammonia molecule from PurQ to PurL. This is Phosphoribosylformylglycinamidine synthase subunit PurL from Parafrankia sp. (strain EAN1pec).